The sequence spans 264 residues: tRNA (guanine-N(1)-)-methyltransferase (264 aa).

S-adenosyl-L-methionine is bound by residues Gly133 and 152–157; that span reads LGDFVM. A compositionally biased stretch (basic and acidic residues) spans 240–251; sequence QRRPDLWRKARG. The interval 240-264 is disordered; sequence QRRPDLWRKARGGEPPADESGEVRR. Acidic residues predominate over residues 255 to 264; the sequence is PADESGEVRR.

Belongs to the RNA methyltransferase TrmD family. In terms of assembly, homodimer.

It is found in the cytoplasm. It catalyses the reaction guanosine(37) in tRNA + S-adenosyl-L-methionine = N(1)-methylguanosine(37) in tRNA + S-adenosyl-L-homocysteine + H(+). Functionally, specifically methylates guanosine-37 in various tRNAs. The sequence is that of tRNA (guanine-N(1)-)-methyltransferase from Sorangium cellulosum (strain So ce56) (Polyangium cellulosum (strain So ce56)).